Consider the following 410-residue polypeptide: Chaperonin GroEL (410 aa).

ATP-binding positions include 29–32 (TAGP), Lys-50, and 86–90 (DGTTT).

This sequence belongs to the chaperonin (HSP60) family. Forms a cylinder of 14 subunits composed of two heptameric rings stacked back-to-back. Interacts with the co-chaperonin GroES.

It localises to the cytoplasm. The enzyme catalyses ATP + H2O + a folded polypeptide = ADP + phosphate + an unfolded polypeptide.. Its function is as follows. Together with its co-chaperonin GroES, plays an essential role in assisting protein folding. The GroEL-GroES system forms a nano-cage that allows encapsulation of the non-native substrate proteins and provides a physical environment optimized to promote and accelerate protein folding. This chain is Chaperonin GroEL, found in Ehrlichia canis.